We begin with the raw amino-acid sequence, 631 residues long: Probable potassium transport system protein Kup 1 (631 aa).

Helical transmembrane passes span 16 to 36 (LGLS…SPLY), 58 to 78 (VLSL…LVFV), 109 to 129 (VLVF…TLTP), 145 to 165 (PLFH…LFLI), 173 to 193 (VGAL…LLGI), 219 to 239 (GWSG…GEAL), 255 to 275 (WFCC…ALLL), 288 to 308 (LAPP…TIIA), 345 to 365 (IYIP…VAGF), 370 to 390 (GLAA…ALLV), 402 to 422 (PLAV…FFGA), and 427 to 447 (VGAG…VMIT).

The protein belongs to the HAK/KUP transporter (TC 2.A.72) family.

It is found in the cell inner membrane. The enzyme catalyses K(+)(in) + H(+)(in) = K(+)(out) + H(+)(out). Its function is as follows. Transport of potassium into the cell. Likely operates as a K(+):H(+) symporter. The sequence is that of Probable potassium transport system protein Kup 1 from Geobacter sulfurreducens (strain ATCC 51573 / DSM 12127 / PCA).